The following is a 153-amino-acid chain: uncharacterized protein (153 aa).

Helical transmembrane passes span 1-21 and 106-126; these read MAAT…LFFS and IVPI…TVYI.

The protein localises to the membrane. This is an uncharacterized protein from Saccharomyces cerevisiae (strain ATCC 204508 / S288c) (Baker's yeast).